Consider the following 641-residue polypeptide: MGKIIGIDLGTTNSCVSVMEGGKPKVIENSEGARTTPSVVAYAEDGEILVGAPAKRQAVTNARNTLFAVKRLIGRRFEEKEVQKDIDLMPYTIAKADNGDAWVEVRGKKIAPPQVSAEVLRKMKKTAEDYLGEEVTEAVITVPAYFNDSQRQATKDAGRIAGLEVKRIINEPTAAALAFGMDKKPGDSKIAVYDLGGGTFDISIIEIADIDGEHQFEVLATNGDTFLGGEDFDQRIIDYIVTEFKKEQGVDLKNDVLALQRLKEAAEKAKIELSSGSQTEVNLPYITADATGPKHLAIKITRAKFESLVEDLIERSIEPCRIALKDAGVKVSDIDDVILVGGQTRMPKVIEKVKEFFGKEPRRDVNPDEAVAVGASIQGGVLQGEVKDVLLLDVTPLSLGIETLGGVMTKLIQKNTTIPTKASQVFSTADDNQSAVTIHVLQGEREMASGNKSLGQFNLSDIPPAPRGMPQIEVTFDIDANGILHVSAKDKATGKENKIKIQANSGLSDEEVERMVRDAAAHAEEDKKAHELVDARNQCDALIHSTKKALAEHGDKIGADDKAKIEAAMKDAEEAIKSGDKDSIEAKSQALAMASQKLGEAMYGQQQAEGGAQAAGAAGGSSKADDADVVDAEFTEVKDKK.

Residue T199 is modified to Phosphothreonine; by autocatalysis. The tract at residues 603-627 (YGQQQAEGGAQAAGAAGGSSKADDA) is disordered. Residues 604–616 (GQQQAEGGAQAAG) show a composition bias toward low complexity.

It belongs to the heat shock protein 70 family.

Functionally, acts as a chaperone. This Azoarcus sp. (strain BH72) protein is Chaperone protein DnaK.